Here is a 119-residue protein sequence, read N- to C-terminus: Large ribosomal subunit protein bL20 (119 aa).

The protein belongs to the bacterial ribosomal protein bL20 family.

In terms of biological role, binds directly to 23S ribosomal RNA and is necessary for the in vitro assembly process of the 50S ribosomal subunit. It is not involved in the protein synthesizing functions of that subunit. This chain is Large ribosomal subunit protein bL20, found in Clostridium perfringens (strain ATCC 13124 / DSM 756 / JCM 1290 / NCIMB 6125 / NCTC 8237 / Type A).